Reading from the N-terminus, the 359-residue chain is 1-deoxy-D-xylulose 5-phosphate reductoisomerase (359 aa).

Thr7, Gly8, Ser9, Ile10, Gly31, Lys32, Asn33, and Asn111 together coordinate NADPH. Residue Lys112 participates in 1-deoxy-D-xylulose 5-phosphate binding. Glu113 contributes to the NADPH binding site. Mn(2+) is bound at residue Asp131. The 1-deoxy-D-xylulose 5-phosphate site is built by Ser132, Glu133, Ser155, and His178. Residue Glu133 participates in Mn(2+) binding. Gly184 is a binding site for NADPH. The 1-deoxy-D-xylulose 5-phosphate site is built by Ser191, Asn196, Lys197, and Glu200. Glu200 contributes to the Mn(2+) binding site.

Belongs to the DXR family. Mg(2+) is required as a cofactor. Mn(2+) serves as cofactor.

It catalyses the reaction 2-C-methyl-D-erythritol 4-phosphate + NADP(+) = 1-deoxy-D-xylulose 5-phosphate + NADPH + H(+). It functions in the pathway isoprenoid biosynthesis; isopentenyl diphosphate biosynthesis via DXP pathway; isopentenyl diphosphate from 1-deoxy-D-xylulose 5-phosphate: step 1/6. Catalyzes the NADPH-dependent rearrangement and reduction of 1-deoxy-D-xylulose-5-phosphate (DXP) to 2-C-methyl-D-erythritol 4-phosphate (MEP). The chain is 1-deoxy-D-xylulose 5-phosphate reductoisomerase from Campylobacter lari (strain RM2100 / D67 / ATCC BAA-1060).